Reading from the N-terminus, the 187-residue chain is Ribosome-recycling factor (187 aa).

It belongs to the RRF family.

Its subcellular location is the cytoplasm. In terms of biological role, responsible for the release of ribosomes from messenger RNA at the termination of protein biosynthesis. May increase the efficiency of translation by recycling ribosomes from one round of translation to another. The chain is Ribosome-recycling factor from Ligilactobacillus salivarius (strain UCC118) (Lactobacillus salivarius).